The primary structure comprises 117 residues: Glycine cleavage system H-like protein (117 aa).

The region spanning 21–103 (IVKLGLSSQM…ESEGWFVVLQ (83 aa)) is the Lipoyl-binding domain. Lys-62 carries the post-translational modification N6-lipoyllysine.

This sequence belongs to the GcvH family. Requires (R)-lipoate as cofactor.

The sequence is that of Glycine cleavage system H-like protein from Chlamydia trachomatis serovar L2 (strain ATCC VR-902B / DSM 19102 / 434/Bu).